Consider the following 235-residue polypeptide: Zorya protein ZorB (235 aa).

A helical transmembrane segment spans residues 25–44 (LMAGLMMVFMFISIAYMHYV). The OmpA-like domain occupies 87–225 (QTLEVRFKSP…RVTFKVVTNA (139 aa)).

The protein belongs to the MotB family.

It is found in the cell inner membrane. Its function is as follows. Component of antiviral defense system Zorya type II, composed of ZorA, ZorB and ZorE. Expression of Zorya type II in E.coli (strain MG1655) confers resistance to phages SECphi7 and T7. While most T7 infected Zorya-containing cells undergo abortive infection, a minority produce viable phage progeny. These eventually accumulate to a high multiplicity of infection, leading to culture collapse by 170 minutes after initial infection. ZorA and ZorB probably assemble in the cell inner membrane and exert their effect there. The protein is Zorya protein ZorB of Escherichia coli (strain ATCC 8739 / DSM 1576 / NBRC 3972 / NCIMB 8545 / WDCM 00012 / Crooks).